A 93-amino-acid polypeptide reads, in one-letter code: Putative regulatory protein Fnod_1678 (93 aa).

It belongs to the RemA family.

The polypeptide is Putative regulatory protein Fnod_1678 (Fervidobacterium nodosum (strain ATCC 35602 / DSM 5306 / Rt17-B1)).